A 67-amino-acid polypeptide reads, in one-letter code: Peptide Hp1239 (67 aa).

Residues 1–23 (MKTQFTVLLITLVLFQMLSQSEA) form the signal peptide. Phe-36 is subject to Phenylalanine amide. The propeptide occupies 40-67 (GLSDLSDLDELFDGEITKADLDLLREIM).

It belongs to the non-disulfide-bridged peptide (NDBP) superfamily. Short antimicrobial peptide (group 4) family. As to expression, expressed by the venom gland.

Its subcellular location is the secreted. The protein localises to the target cell membrane. Its function is as follows. Amphipathic peptide with antibacterial activities. Shows antiviral activities against the herpes simplex virus type-1. It potently inhibits the initial infection by provoking the rupture of viral envelop and the dissociation of proteins from the virions (EC(50) is 0.41 uM). It also effectively inhibits viral attachment (EC(50) is 5.73 uM), viral entry (EC(50) is 4.32 uM) and viral proliferation after infection (EC(50) is 8.41 uM). Morever, it enters mammalian tested cells (Vero) and reduces the intracellular infectivity. The protein is Peptide Hp1239 of Heterometrus petersii (Asian forest scorpion).